The following is a 229-amino-acid chain: Heptaprenylglyceryl phosphate synthase (229 aa).

Lys12 is a binding site for sn-glycerol 1-phosphate. Mg(2+) is bound by residues Asp14 and Thr40. Residues 159 to 164, Gly189, and 209 to 210 contribute to the sn-glycerol 1-phosphate site; these read YIEYSG and GN.

It belongs to the GGGP/HepGP synthase family. Group I subfamily. In terms of assembly, homodimer. Mg(2+) serves as cofactor.

The enzyme catalyses sn-glycerol 1-phosphate + all-trans-heptaprenyl diphosphate = 3-heptaprenyl-sn-glycero-1-phosphate + diphosphate. The protein operates within membrane lipid metabolism; glycerophospholipid metabolism. In terms of biological role, prenyltransferase that catalyzes in vivo the transfer of the heptaprenyl moiety of heptaprenyl pyrophosphate (HepPP; 35 carbon atoms) to the C3 hydroxyl of sn-glycerol-1-phosphate (G1P), producing heptaprenylglyceryl phosphate (HepGP). This reaction is an ether-bond-formation step in the biosynthesis of archaea-type G1P-based membrane lipids found in Bacillales. The sequence is that of Heptaprenylglyceryl phosphate synthase from Staphylococcus carnosus (strain TM300).